The primary structure comprises 902 residues: Cytosolic 10-formyltetrahydrofolate dehydrogenase (902 aa).

A hydrolase domain region spans residues 1-310 (MKIAVIGQSL…LASNFFKGAA (310 aa)). At S9 the chain carries Phosphoserine. Position 38 is an N6-succinyllysine (K38). 88 to 90 (QFI) serves as a coordination point for (6R)-10-formyltetrahydrofolate. Residue H106 is the Proton donor of the active site. Residue D142 participates in (6R)-10-formyltetrahydrofolate binding. Residues 318-395 (EAELVTAEAV…DFIQLLVRKL (78 aa)) enclose the Carrier domain. O-(pantetheine 4'-phosphoryl)serine is present on S354. The segment at 417–902 (TVRMPHQLFI…LRVKTVTFEY (486 aa)) is aldehyde dehydrogenase domain. NADP(+) is bound by residues 571 to 573 (IPW) and 597 to 600 (KPAQ). S629 and S631 each carry phosphoserine. NADP(+)-binding positions include 630 to 635 (GSLVGQ) and 650 to 651 (GS). An N6-succinyllysine modification is found at K660. The Proton acceptor role is filled by E673. Residue 673 to 674 (EL) coordinates NADP(+). The active-site Proton donor is the C707. K757 provides a ligand contact to NADP(+). N6-succinyllysine is present on K767. 804–806 (ESF) contributes to the NADP(+) binding site. A Phosphoserine modification is found at S825. N6-acetyllysine is present on K882.

It in the N-terminal section; belongs to the GART family. In the C-terminal section; belongs to the aldehyde dehydrogenase family. ALDH1L subfamily. In terms of assembly, homotetramer. Post-translationally, phosphopantetheinylation at Ser-354 by AASDHPPT is required for the formyltetrahydrofolate dehydrogenase activity. Highly expressed in liver, pancreas and kidney.

It is found in the cytoplasm. The protein resides in the cytosol. The enzyme catalyses (6R)-10-formyltetrahydrofolate + NADP(+) + H2O = (6S)-5,6,7,8-tetrahydrofolate + CO2 + NADPH + H(+). Its function is as follows. Cytosolic 10-formyltetrahydrofolate dehydrogenase that catalyzes the NADP(+)-dependent conversion of 10-formyltetrahydrofolate to tetrahydrofolate and carbon dioxide. May also have an NADP(+)-dependent aldehyde dehydrogenase activity towards formaldehyde, acetaldehyde, propionaldehyde, and benzaldehyde. This chain is Cytosolic 10-formyltetrahydrofolate dehydrogenase, found in Homo sapiens (Human).